We begin with the raw amino-acid sequence, 388 residues long: Dual-specificity RNA methyltransferase RlmN (388 aa).

The active-site Proton acceptor is the E109. The region spanning 115-354 is the Radical SAM core domain; it reads EDDRATLCVS…TIVRKTRGDD (240 aa). An intrachain disulfide couples C122 to C359. 3 residues coordinate [4Fe-4S] cluster: C129, C133, and C136. Residues 183 to 184, S215, 237 to 239, and N316 contribute to the S-adenosyl-L-methionine site; these read GE and SLH. C359 serves as the catalytic S-methylcysteine intermediate.

This sequence belongs to the radical SAM superfamily. RlmN family. [4Fe-4S] cluster is required as a cofactor.

It is found in the cytoplasm. The catalysed reaction is adenosine(2503) in 23S rRNA + 2 reduced [2Fe-2S]-[ferredoxin] + 2 S-adenosyl-L-methionine = 2-methyladenosine(2503) in 23S rRNA + 5'-deoxyadenosine + L-methionine + 2 oxidized [2Fe-2S]-[ferredoxin] + S-adenosyl-L-homocysteine. It catalyses the reaction adenosine(37) in tRNA + 2 reduced [2Fe-2S]-[ferredoxin] + 2 S-adenosyl-L-methionine = 2-methyladenosine(37) in tRNA + 5'-deoxyadenosine + L-methionine + 2 oxidized [2Fe-2S]-[ferredoxin] + S-adenosyl-L-homocysteine. Functionally, specifically methylates position 2 of adenine 2503 in 23S rRNA and position 2 of adenine 37 in tRNAs. m2A2503 modification seems to play a crucial role in the proofreading step occurring at the peptidyl transferase center and thus would serve to optimize ribosomal fidelity. The chain is Dual-specificity RNA methyltransferase RlmN from Citrobacter koseri (strain ATCC BAA-895 / CDC 4225-83 / SGSC4696).